The primary structure comprises 549 residues: SH3 domain-containing protein 21 (549 aa).

A disordered region spans residues 1–56 (MVQSELQLQPRAGRRADASNWGDFGSDKGGLGNTDIPPITPNSQRPPKLSNLTYDS). Residues 41–54 (PNSQRPPKLSNLTY) are compositionally biased toward polar residues. The region spanning 65–126 (SCPETCRVLF…PDNFVIPPPP (62 aa)) is the SH3 domain. Disordered stretches follow at residues 142 to 303 (PIKE…KPAK) and 332 to 479 (FKKE…KSKN). Residues 211–220 (QASQQHSASS) show a composition bias toward low complexity. Composition is skewed to basic and acidic residues over residues 267 to 280 (PVPKKAPDSDKIPA) and 332 to 342 (FKKEPSRDNDQ). 2 stretches are compositionally biased toward polar residues: residues 343-365 (CQHLPQGGSTQRPESPAPSNNIQ) and 439-456 (VLPQESAPTPQVPHTIQQ). The stretch at 482–510 (MDVLESLKEEVGLLRSRLELLELKLEQKM) forms a coiled coil. The disordered stretch occupies residues 528 to 549 (QMMQRNRKSFKHAETQTETQTE).

This is SH3 domain-containing protein 21 (Sh3d21) from Mus musculus (Mouse).